Here is a 927-residue protein sequence, read N- to C-terminus: Ribosome-releasing factor 2, mitochondrial (927 aa).

The N-terminal 57 residues, 1 to 57, are a transit peptide targeting the mitochondrion; that stretch reads MVTAPLLGWVAVRPIPRLSKLNTCKYVSSSLQSYKRSVGSCLGKQQSRDFSYSATLT. Positions 64 to 379 constitute a tr-type G domain; it reads EKTRNIGIIA…AVNNLLPGPS (316 aa). GTP is bound by residues 73–80, 163–167, and 217–220; these read AHIDAGKT, DTPGH, and NKLD.

It belongs to the TRAFAC class translation factor GTPase superfamily. Classic translation factor GTPase family. EF-G/EF-2 subfamily.

Its subcellular location is the mitochondrion. Mitochondrial GTPase that mediates the disassembly of ribosomes from messenger RNA at the termination of mitochondrial protein biosynthesis. Not involved in the GTP-dependent ribosomal translocation step during translation elongation. The polypeptide is Ribosome-releasing factor 2, mitochondrial (mef2) (Talaromyces marneffei (strain ATCC 18224 / CBS 334.59 / QM 7333) (Penicillium marneffei)).